A 147-amino-acid chain; its full sequence is MVHWTDFERSTIKDIFAKIDYDCVGPAAFARCLIVYPWTQRYFGNFGNLFNAAAIIGNPNVAKHGITIMHGLERGVKNLDHLTETYEELSVLHSEKLHVDPDNFKLISDCLTIVVASRLGKAFTGEVQAALQKFLAVVVFSLGKQYH.

The Globin domain maps to 3-147; sequence HWTDFERSTI…VVFSLGKQYH (145 aa). Heme b contacts are provided by histidine 64 and histidine 93.

Belongs to the globin family. Hb1 is a heterotetramer of two alpha-1 chains and two beta-1 chains. In terms of tissue distribution, red blood cells.

Functionally, involved in oxygen transport from gills to the various peripheral tissues. In Liparis tunicatus (Kelp snailfish), this protein is Hemoglobin subunit beta-1.